The following is a 232-amino-acid chain: Orotidine 5'-phosphate decarboxylase (232 aa).

Substrate is bound by residues aspartate 11, lysine 33, 60–69 (DLKFHDIPNT), threonine 120, arginine 181, glutamine 190, glycine 210, and arginine 211. Lysine 62 serves as the catalytic Proton donor.

It belongs to the OMP decarboxylase family. Type 1 subfamily. As to quaternary structure, homodimer.

It carries out the reaction orotidine 5'-phosphate + H(+) = UMP + CO2. It participates in pyrimidine metabolism; UMP biosynthesis via de novo pathway; UMP from orotate: step 2/2. Catalyzes the decarboxylation of orotidine 5'-monophosphate (OMP) to uridine 5'-monophosphate (UMP). In Vibrio vulnificus (strain CMCP6), this protein is Orotidine 5'-phosphate decarboxylase.